We begin with the raw amino-acid sequence, 314 residues long: Ecto-ADP-ribosyltransferase 4 (314 aa).

Residues Met-1–Gly-46 form the signal peptide. Cystine bridges form between Cys-69/Cys-280 and Cys-182/Cys-231. The 186-residue stretch at Lys-91 to Ser-276 folds into the TR mART core domain. Asn-114 is a glycosylation site (N-linked (GlcNAc...) asparagine). Position 126 (Tyr-126) interacts with NAD(+). Asn-178 is a glycosylation site (N-linked (GlcNAc...) asparagine). Gln-206 lines the NAD(+) pocket. Residue Asn-222 is glycosylated (N-linked (GlcNAc...) asparagine). Residue Ser-240 coordinates NAD(+). Asn-257 and Asn-274 each carry an N-linked (GlcNAc...) asparagine glycan. A lipid anchor (GPI-anchor amidated alanine) is attached at Ala-285. The propeptide at Ser-286–Val-314 is removed in mature form.

It belongs to the Arg-specific ADP-ribosyltransferase family. As to expression, expressed in spleen and T-cells.

Its subcellular location is the cell membrane. The catalysed reaction is L-arginyl-[protein] + NAD(+) = N(omega)-(ADP-D-ribosyl)-L-arginyl-[protein] + nicotinamide + H(+). The polypeptide is Ecto-ADP-ribosyltransferase 4 (ART4) (Homo sapiens (Human)).